Here is a 122-residue protein sequence, read N- to C-terminus: Large ribosomal subunit protein bL12 (122 aa).

It belongs to the bacterial ribosomal protein bL12 family. As to quaternary structure, homodimer. Part of the ribosomal stalk of the 50S ribosomal subunit. Forms a multimeric L10(L12)X complex, where L10 forms an elongated spine to which 2 to 4 L12 dimers bind in a sequential fashion. Binds GTP-bound translation factors.

Functionally, forms part of the ribosomal stalk which helps the ribosome interact with GTP-bound translation factors. Is thus essential for accurate translation. The protein is Large ribosomal subunit protein bL12 of Staphylococcus saprophyticus subsp. saprophyticus (strain ATCC 15305 / DSM 20229 / NCIMB 8711 / NCTC 7292 / S-41).